Reading from the N-terminus, the 286-residue chain is Bifunctional protein FolD (286 aa).

Residues 163 to 165, I188, and I229 each bind NADP(+); that span reads GMS.

Belongs to the tetrahydrofolate dehydrogenase/cyclohydrolase family. Homodimer.

The catalysed reaction is (6R)-5,10-methylene-5,6,7,8-tetrahydrofolate + NADP(+) = (6R)-5,10-methenyltetrahydrofolate + NADPH. It catalyses the reaction (6R)-5,10-methenyltetrahydrofolate + H2O = (6R)-10-formyltetrahydrofolate + H(+). It functions in the pathway one-carbon metabolism; tetrahydrofolate interconversion. In terms of biological role, catalyzes the oxidation of 5,10-methylenetetrahydrofolate to 5,10-methenyltetrahydrofolate and then the hydrolysis of 5,10-methenyltetrahydrofolate to 10-formyltetrahydrofolate. In Helicobacter hepaticus (strain ATCC 51449 / 3B1), this protein is Bifunctional protein FolD.